A 441-amino-acid polypeptide reads, in one-letter code: Arginine biosynthesis bifunctional protein ArgJ, mitochondrial (441 aa).

The substrate site is built by threonine 177, lysine 204, threonine 215, glutamate 301, asparagine 436, and serine 441. The Nucleophile role is filled by threonine 215.

The protein belongs to the ArgJ family. As to quaternary structure, heterodimer of an alpha and a beta chain. Post-translationally, the alpha and beta chains are autoproteolytically processed from a single precursor protein within the mitochondrion.

Its subcellular location is the mitochondrion matrix. The enzyme catalyses N(2)-acetyl-L-ornithine + L-glutamate = N-acetyl-L-glutamate + L-ornithine. It carries out the reaction L-glutamate + acetyl-CoA = N-acetyl-L-glutamate + CoA + H(+). It participates in amino-acid biosynthesis; L-arginine biosynthesis; L-ornithine and N-acetyl-L-glutamate from L-glutamate and N(2)-acetyl-L-ornithine (cyclic): step 1/1. It functions in the pathway amino-acid biosynthesis; L-arginine biosynthesis; N(2)-acetyl-L-ornithine from L-glutamate: step 1/4. Functionally, catalyzes two activities which are involved in the cyclic version of arginine biosynthesis: the synthesis of acetylglutamate from glutamate and acetyl-CoA, and of ornithine by transacetylation between acetylornithine and glutamate. In Kluyveromyces lactis (strain ATCC 8585 / CBS 2359 / DSM 70799 / NBRC 1267 / NRRL Y-1140 / WM37) (Yeast), this protein is Arginine biosynthesis bifunctional protein ArgJ, mitochondrial.